A 290-amino-acid polypeptide reads, in one-letter code: Release factor glutamine methyltransferase (290 aa).

The S-adenosyl-L-methionine site is built by Asp140 and Asn181. 181 to 184 (NPPY) is a substrate binding site.

This sequence belongs to the protein N5-glutamine methyltransferase family. PrmC subfamily.

The catalysed reaction is L-glutaminyl-[peptide chain release factor] + S-adenosyl-L-methionine = N(5)-methyl-L-glutaminyl-[peptide chain release factor] + S-adenosyl-L-homocysteine + H(+). Functionally, methylates the class 1 translation termination release factors RF1/PrfA and RF2/PrfB on the glutamine residue of the universally conserved GGQ motif. The sequence is that of Release factor glutamine methyltransferase from Chlamydia trachomatis serovar D (strain ATCC VR-885 / DSM 19411 / UW-3/Cx).